Consider the following 761-residue polypeptide: Translational repressor ifet-1 (761 aa).

Disordered regions lie at residues 101–274 (SPQR…SSGG), 386–446 (KGME…QHLH), 557–592 (VQRQLQKSSSNADQKKEKTSQSPPESNQETSDAHNQ), 681–702 (QQAQMANMQERQGPSHNQQQHQ), and 730–761 (GSQFTGSGDRIPSSVRPMSLEDLEKQLTAVPK). Basic and acidic residues-rich tracts occupy residues 114-128 (PTDDKGRDGEYERLG), 164-189 (RGTRGAEWKKDTTRGAKFAPRREERL), and 212-222 (IELRGFDEPKK). Composition is skewed to polar residues over residues 400 to 410 (QDPSQQAQLLQ), 557 to 568 (VQRQLQKSSSNA), 576 to 592 (SQSPPESNQETSDAHNQ), and 690 to 702 (ERQGPSHNQQQHQ).

Interacts with cgh-1. Interacts with ife-1 and oma-1. In the embryo, significantly enriched in the germ cell lineage.

Its subcellular location is the cytoplasm. In terms of biological role, involved in translational repression of multiple mRNAs in the distal gonad. Recruited to the 3' untranslated region (UTR) of zif-1 by oma-1 and is required for translational repression of zif-1. May also be involved in translational repression of mei-1 through recruitment to the mei-1 3' UTR by oma-1. Required for oogenesis but not spermatogenesis, for P granule formation and for the localization of car-1 and cgh-1 to P granules. Required for normal spindle orientation in early embryos. The polypeptide is Translational repressor ifet-1 (Caenorhabditis elegans).